We begin with the raw amino-acid sequence, 324 residues long: HTH-type transcriptional regulator CysB (324 aa).

The HTH lysR-type domain occupies 1 to 59 (MKLQQLRYIVEVVNHNLNVSSTAEGLYTSQPGISKQVRMLEDELGIQIFARSGKHLTQV). The segment at residues 19 to 38 (VSSTAEGLYTSQPGISKQVR) is a DNA-binding region (H-T-H motif).

It belongs to the LysR transcriptional regulatory family. As to quaternary structure, homotetramer.

The protein localises to the cytoplasm. Its function is as follows. This protein is a positive regulator of gene expression for the cysteine regulon. The inducer for CysB is N-acetylserine. Thiosulfate and sulfide act as anti-inducers. The polypeptide is HTH-type transcriptional regulator CysB (cysB) (Klebsiella pneumoniae).